We begin with the raw amino-acid sequence, 1146 residues long: Cell division cycle and apoptosis regulator protein 1 (1146 aa).

The segment at 1 to 246 is interaction with AR; that stretch reads MAQFGGQKNP…AQPQPQSLLQ (246 aa). An interaction with GATA2 region spans residues 200–657; that stretch reads QRIQTLPNQN…RALSSKGLKS (458 aa). Positions 282–351 are disordered; sequence IVSQPQPARR…RRERERSPRR (70 aa). Basic and acidic residues-rich tracts occupy residues 290–331 and 338–349; these read RRLD…ERSP and ERSPRRERERSP. Ser-453 carries the phosphoserine modification. A coiled-coil region spans residues 591–615; the sequence is KQQLVEKLQGERKKADGEQDEEEKD. A disordered region spans residues 599–635; the sequence is QGERKKADGEQDEEEKDDGEVKEIATPTHWSKLDPKA. Over residues 608–618 the composition is skewed to acidic residues; sequence EQDEEEKDDGE. Thr-624 carries the phosphothreonine modification. An SAP domain is found at 633 to 667; it reads PKAMKVNDLRKELESRALSSKGLKSQLIARLTKQL. A Glycyl lysine isopeptide (Lys-Gly) (interchain with G-Cter in ubiquitin) cross-link involves residue Lys-634. Residues 640–1146 form an interaction with GATA1 region; the sequence is DLRKELESRA…EKSKENGSGV (507 aa). Thr-664 is subject to Phosphothreonine. Composition is skewed to basic and acidic residues over residues 671–684, 691–716, 793–814, and 829–852; these read EQKEEQKELEKSEK, DKKSEDDKEEEERKRQEEVERQRQER, KEDKKDKEKKSKKEERKDKKEE, and SGDDKDKKEDRDERKKEEKRKDDS. 2 disordered regions span residues 671-716 and 793-912; these read EQKE…RQER and KEDK…KEKP. Phosphoserine occurs at positions 682 and 694. Residues 853–884 are compositionally biased toward acidic residues; sequence KDDDETEEDNNQDEYDPMEAEEAEDEDDDREE. Thr-858 carries the phosphothreonine modification. Residues 885–912 are compositionally biased toward basic and acidic residues; the sequence is EEVKRDDKRDVSRYCKDRPAKDKEKEKP. Lys-1008 is covalently cross-linked (Glycyl lysine isopeptide (Lys-Gly) (interchain with G-Cter in SUMO1); alternate). Lys-1008 participates in a covalent cross-link: Glycyl lysine isopeptide (Lys-Gly) (interchain with G-Cter in SUMO2); alternate. The stretch at 1029–1110 forms a coiled coil; the sequence is DVGSLLQKLE…LQFENQLNKT (82 aa). Glycyl lysine isopeptide (Lys-Gly) (interchain with G-Cter in SUMO2) cross-links involve residues Lys-1063 and Lys-1131.

As to quaternary structure, directly interacts with ESR1, NR3C1 and p53/TP53. Interacts (via N-terminus) with CALCOCO1. Interacts with MED1 and GATA1. Interacts with AR and GATA2.

It localises to the cytoplasm. It is found in the perinuclear region. Associates with components of the Mediator and p160 coactivator complexes that play a role as intermediaries transducing regulatory signals from upstream transcriptional activator proteins to basal transcription machinery at the core promoter. Recruited to endogenous nuclear receptor target genes in response to the appropriate hormone. Also functions as a p53 coactivator. May thus play an important role in transcriptional regulation. May be involved in apoptosis signaling in the presence of the retinoid CD437. Apoptosis induction involves sequestration of 14-3-3 protein(s) and mediated altered expression of multiple cell cycle regulatory genes including MYC, CCNB1 and CDKN1A. Plays a role in cell cycle progression and/or cell proliferation. In association with CALCOCO1 enhances GATA1- and MED1-mediated transcriptional activation from the gamma-globin promoter during erythroid differentiation of K562 erythroleukemia cells. Can act as a both a coactivator and corepressor of AR-mediated transcription. Contributes to chromatin looping and AR transcription complex assembly by stabilizing AR-GATA2 association on chromatin and facilitating MED1 and RNA polymerase II recruitment to AR-binding sites. May play an important role in the growth and tumorigenesis of prostate cancer cells. In Mus musculus (Mouse), this protein is Cell division cycle and apoptosis regulator protein 1 (Ccar1).